The chain runs to 157 residues: Nascent polypeptide-associated complex subunit beta (157 aa).

Positions 1 to 28 are disordered; the sequence is MPVDPEKLAKLQKSSAKKVGGSRVKAKK. The region spanning 33–98 is the NAC-A/B domain; it reads EQDDTKLIEA…PQEKNITQLI (66 aa). The segment at 124–157 is disordered; that stretch reads KTPKDFNTGSANAAADAGGEDIPDLVDQKFDDVE.

The protein belongs to the NAC-beta family. As to quaternary structure, part of the nascent polypeptide-associated complex (NAC), consisting of EGD2 and EGD1. NAC associates with ribosomes via EGD1.

Its subcellular location is the cytoplasm. The protein localises to the nucleus. Component of the nascent polypeptide-associated complex (NAC), a dynamic component of the ribosomal exit tunnel, protecting the emerging polypeptides from interaction with other cytoplasmic proteins to ensure appropriate nascent protein targeting. The NAC complex also promotes mitochondrial protein import by enhancing productive ribosome interactions with the outer mitochondrial membrane and blocks the inappropriate interaction of ribosomes translating non-secretory nascent polypeptides with translocation sites in the membrane of the endoplasmic reticulum. EGD1 may act as a transcription factor that exert a negative effect on the expression of several genes that are transcribed by RNA polymerase II. The chain is Nascent polypeptide-associated complex subunit beta (EGD1) from Candida albicans (strain SC5314 / ATCC MYA-2876) (Yeast).